A 282-amino-acid chain; its full sequence is NADPH-dependent 7-cyano-7-deazaguanine reductase (282 aa).

88–90 (IES) is a binding site for substrate. Position 90–91 (90–91 (SK)) interacts with NADPH. Cysteine 190 acts as the Thioimide intermediate in catalysis. Aspartate 197 serves as the catalytic Proton donor. 229 to 230 (HE) contacts substrate. An NADPH-binding site is contributed by 258-259 (RG).

Belongs to the GTP cyclohydrolase I family. QueF type 2 subfamily. In terms of assembly, homodimer.

It localises to the cytoplasm. It catalyses the reaction 7-aminomethyl-7-carbaguanine + 2 NADP(+) = 7-cyano-7-deazaguanine + 2 NADPH + 3 H(+). The protein operates within tRNA modification; tRNA-queuosine biosynthesis. In terms of biological role, catalyzes the NADPH-dependent reduction of 7-cyano-7-deazaguanine (preQ0) to 7-aminomethyl-7-deazaguanine (preQ1). This chain is NADPH-dependent 7-cyano-7-deazaguanine reductase, found in Pectobacterium carotovorum subsp. carotovorum (strain PC1).